Consider the following 419-residue polypeptide: O-methyltransferase gsfB (419 aa).

S-adenosyl-L-methionine contacts are provided by residues 255–256, aspartate 278, 300–301, and arginine 316; these read GG and DF. Catalysis depends on histidine 320, which acts as the Proton acceptor.

It belongs to the class I-like SAM-binding methyltransferase superfamily. Cation-independent O-methyltransferase family.

The catalysed reaction is 2-(2,4-dihydroxy-6-oxidobenzoyl)-5-hydroxy-3-methylbenzenolate + S-adenosyl-L-methionine = griseophenone D + S-adenosyl-L-homocysteine + H(+). It functions in the pathway secondary metabolite biosynthesis; terpenoid biosynthesis. Functionally, O-methyltransferase; part of the gene cluster that mediates the biosynthesis of griseofulvin, an important antifungal drug that has been in use for a long time for treating dermatophyte infections. The first step of the pathway is the formation of the heptaketide backbone by gsfA which is initiated by priming with acetyl-CoA, followed by sequential condensations of 6 malonyl-CoA units. The resulting benzophenone can undergo a spontaneous dehydration to form norlichexanthone. However, the true precursor for the griseofulvin biosynthesis is not norlichexanthone, but the heptaketide benzophenone that is O-methylated at 3-OH by gsfB to produce griseophenone D which is further methylated at 9-OH by gsfC to yield griseophenone C. Griseophenone C is then substrate of halogenase gsfI which is responsible for the regio-specific chlorination at the C13 position to form griseophenone B. The cytochrome P450 gsfF catalyzes the coupling of orcinol and phloroglucinol rings in griseophenone B to form desmethyl-dehydrogriseofulvin A which is further methylated at 5-OH by gsfD to yield dehydrogriseofulvin. Finally, gsfE performs stereospecific reduction of enone 18 of dehydrogriseofulvin to afford the final product griseofulvin. This is O-methyltransferase gsfB from Penicillium aethiopicum.